The following is a 508-amino-acid chain: Probable cytochrome P450 6d5 (508 aa).

Cysteine 453 serves as a coordination point for heme.

This sequence belongs to the cytochrome P450 family. Requires heme as cofactor.

It localises to the endoplasmic reticulum membrane. The protein resides in the microsome membrane. Functionally, may be involved in the metabolism of insect hormones and in the breakdown of synthetic insecticides. The polypeptide is Probable cytochrome P450 6d5 (Cyp6d5) (Drosophila melanogaster (Fruit fly)).